The sequence spans 116 residues: Iron-sulfur cluster insertion protein ErpA (116 aa).

3 residues coordinate iron-sulfur cluster: cysteine 44, cysteine 108, and cysteine 110.

Belongs to the HesB/IscA family. As to quaternary structure, homodimer. Requires iron-sulfur cluster as cofactor.

Required for insertion of 4Fe-4S clusters for at least IspG. In Stutzerimonas stutzeri (strain A1501) (Pseudomonas stutzeri), this protein is Iron-sulfur cluster insertion protein ErpA.